The chain runs to 89 residues: Large ribosomal subunit protein bL27 (89 aa).

Positions 1 to 21 (MAHKKAGGSSRNGRDSQSKRL) are disordered.

This sequence belongs to the bacterial ribosomal protein bL27 family.

The chain is Large ribosomal subunit protein bL27 from Rhizobium leguminosarum bv. trifolii (strain WSM2304).